A 199-amino-acid chain; its full sequence is Recombination protein RecR (199 aa).

The C4-type zinc-finger motif lies at 58–73 (CKVCTNLTDQEVCNIC). The Toprim domain occupies 81-176 (LLICVVEDPR…KVSRIAHGIP (96 aa)).

The protein belongs to the RecR family.

Its function is as follows. May play a role in DNA repair. It seems to be involved in an RecBC-independent recombinational process of DNA repair. It may act with RecF and RecO. The protein is Recombination protein RecR of Alkaliphilus oremlandii (strain OhILAs) (Clostridium oremlandii (strain OhILAs)).